A 264-amino-acid polypeptide reads, in one-letter code: 3-methyl-2-oxobutanoate hydroxymethyltransferase (264 aa).

Positions 45 and 84 each coordinate Mg(2+). 3-methyl-2-oxobutanoate is bound by residues 45–46, D84, and K112; that span reads DS. Residue E114 coordinates Mg(2+). E181 functions as the Proton acceptor in the catalytic mechanism.

Belongs to the PanB family. In terms of assembly, homodecamer; pentamer of dimers. Mg(2+) serves as cofactor.

The protein resides in the cytoplasm. The enzyme catalyses 3-methyl-2-oxobutanoate + (6R)-5,10-methylene-5,6,7,8-tetrahydrofolate + H2O = 2-dehydropantoate + (6S)-5,6,7,8-tetrahydrofolate. It functions in the pathway cofactor biosynthesis; (R)-pantothenate biosynthesis; (R)-pantoate from 3-methyl-2-oxobutanoate: step 1/2. Catalyzes the reversible reaction in which hydroxymethyl group from 5,10-methylenetetrahydrofolate is transferred onto alpha-ketoisovalerate to form ketopantoate. This Shewanella denitrificans (strain OS217 / ATCC BAA-1090 / DSM 15013) protein is 3-methyl-2-oxobutanoate hydroxymethyltransferase.